The chain runs to 511 residues: MHYRDLRDFIAALETRGELKRVGQPVSPRLEMTDLCDRTLRAEGPALLFEAPQTGNTRYASPVLGNLFGTPRRVALGMGAENVSALRDIGQLLAMLKEPEPPKGLRDAWDKFPLYKKVLDMAPKTIRRAPVQEVVEEGPEVDLARLPVWHCWPGDVAPLITWGLTVTRGPAKKRQNLGIYRQQVISRNQVIMRWLAHRGGALDFRDWRRTRPGEPFPVSVVLGCDPATILGAVTPVPDTLSEYQFAGLLRGSRTELTQSLGNDLQVPAFAEIVLEGHLSPCEAGFSGVSEHGIPLKEIDGYLHALEGPYGDHTGYYNEQDWFPVFTIDRLTRRPDAIYHSTYTGKPIDEPAVLGVALNEVFVPILQKQFPEIVDFYLPPEGCSYRMAVVSIRKQYAGHAKRVMMGCWSFLRQFMYTKFIVVVDDDIDTRDWKEVMWAITTRMDPVRDTVLVENTPIDYLDFASPVSGLGGKMGMDATNKWPGETDREWGRPIVKDAAVAARVDQLWQTLGL.

N176 lines the Mn(2+) pocket. Residues 179–181 (IYR), 193–195 (RWL), and 198–199 (RG) each bind prenylated FMN. Residue E242 participates in Mn(2+) binding. D311 serves as the catalytic Proton donor.

It belongs to the UbiD family. In terms of assembly, homohexamer. Prenylated FMN serves as cofactor. The cofactor is Mn(2+).

It is found in the cell membrane. It carries out the reaction a 4-hydroxy-3-(all-trans-polyprenyl)benzoate + H(+) = a 2-(all-trans-polyprenyl)phenol + CO2. It functions in the pathway cofactor biosynthesis; ubiquinone biosynthesis. Its function is as follows. Catalyzes the decarboxylation of 3-octaprenyl-4-hydroxy benzoate to 2-octaprenylphenol, an intermediate step in ubiquinone biosynthesis. This chain is 3-octaprenyl-4-hydroxybenzoate carboxy-lyase, found in Laribacter hongkongensis (strain HLHK9).